A 207-amino-acid chain; its full sequence is Small ribosomal subunit protein uS4 (207 aa).

The tract at residues 31 to 55 is disordered; that stretch reads KCKLDSKPGQHGRTSGARTSDYGTQ. Residues 42-53 are compositionally biased toward polar residues; that stretch reads GRTSGARTSDYG. The S4 RNA-binding domain maps to 97–160; the sequence is SRLDNVVYRM…KKQARIVEAL (64 aa).

This sequence belongs to the universal ribosomal protein uS4 family. Part of the 30S ribosomal subunit. Contacts protein S5. The interaction surface between S4 and S5 is involved in control of translational fidelity.

Its function is as follows. One of the primary rRNA binding proteins, it binds directly to 16S rRNA where it nucleates assembly of the body of the 30S subunit. With S5 and S12 plays an important role in translational accuracy. The polypeptide is Small ribosomal subunit protein uS4 (Burkholderia ambifaria (strain MC40-6)).